The primary structure comprises 146 residues: Protein translocase subunit SecE (146 aa).

The tract at residues 1 to 81 is disordered; that stretch reads MSDERYAASD…KVKKPKKSAD (81 aa). Over residues 10–20 the composition is skewed to gly residues; sequence DGGGTEVGSGT. Residues 45 to 54 are compositionally biased toward polar residues; sequence RAANASNTGA. Over residues 69–81 the composition is skewed to basic and acidic residues; the sequence is KEGKVKKPKKSAD. A helical transmembrane segment spans residues 118 to 138; it reads VVLAFLAFMVALVGLADFGLA.

The protein belongs to the SecE/SEC61-gamma family. Component of the Sec protein translocase complex. Heterotrimer consisting of SecY, SecE and SecG subunits. The heterotrimers can form oligomers, although 1 heterotrimer is thought to be able to translocate proteins. Interacts with the ribosome. Interacts with SecDF, and other proteins may be involved. Interacts with SecA.

It is found in the cell membrane. Its function is as follows. Essential subunit of the Sec protein translocation channel SecYEG. Clamps together the 2 halves of SecY. May contact the channel plug during translocation. This Mycobacterium leprae (strain TN) protein is Protein translocase subunit SecE.